Consider the following 263-residue polypeptide: Tryptophan synthase alpha chain (263 aa).

Active-site proton acceptor residues include E49 and D60.

Belongs to the TrpA family. Tetramer of two alpha and two beta chains.

The enzyme catalyses (1S,2R)-1-C-(indol-3-yl)glycerol 3-phosphate + L-serine = D-glyceraldehyde 3-phosphate + L-tryptophan + H2O. Its pathway is amino-acid biosynthesis; L-tryptophan biosynthesis; L-tryptophan from chorismate: step 5/5. Its function is as follows. The alpha subunit is responsible for the aldol cleavage of indoleglycerol phosphate to indole and glyceraldehyde 3-phosphate. In Cereibacter sphaeroides (strain KD131 / KCTC 12085) (Rhodobacter sphaeroides), this protein is Tryptophan synthase alpha chain.